Reading from the N-terminus, the 855-residue chain is Leucine--tRNA ligase (855 aa).

The short motif at 42–52 (PYPSGSLHVGH) is the 'HIGH' region element. A disordered region spans residues 292-311 (SEMDRTAEDKPKKGIPTGGK). Basic and acidic residues predominate over residues 293–303 (EMDRTAEDKPK). Positions 614-618 (KMSKS) match the 'KMSKS' region motif. Position 617 (K617) interacts with ATP.

This sequence belongs to the class-I aminoacyl-tRNA synthetase family.

It localises to the cytoplasm. The enzyme catalyses tRNA(Leu) + L-leucine + ATP = L-leucyl-tRNA(Leu) + AMP + diphosphate. The polypeptide is Leucine--tRNA ligase (Acaryochloris marina (strain MBIC 11017)).